Consider the following 542-residue polypeptide: GMP synthase [glutamine-hydrolyzing] (542 aa).

The region spanning methionine 28–threonine 218 is the Glutamine amidotransferase type-1 domain. Cysteine 105 (nucleophile) is an active-site residue. Residues histidine 192 and glutamate 194 contribute to the active site. A GMPS ATP-PPase domain is found at tryptophan 219–arginine 417. ATP is bound at residue serine 246–serine 252.

In terms of assembly, homodimer.

The enzyme catalyses XMP + L-glutamine + ATP + H2O = GMP + L-glutamate + AMP + diphosphate + 2 H(+). The protein operates within purine metabolism; GMP biosynthesis; GMP from XMP (L-Gln route): step 1/1. In terms of biological role, catalyzes the synthesis of GMP from XMP. The protein is GMP synthase [glutamine-hydrolyzing] of Crocosphaera subtropica (strain ATCC 51142 / BH68) (Cyanothece sp. (strain ATCC 51142)).